A 226-amino-acid chain; its full sequence is 7-cyano-7-deazaguanine synthase (226 aa).

ATP is bound at residue 8 to 18; it reads ISGGLDSTTCL. The Zn(2+) site is built by C188, C198, C201, and C204.

It belongs to the QueC family. Zn(2+) is required as a cofactor.

The enzyme catalyses 7-carboxy-7-deazaguanine + NH4(+) + ATP = 7-cyano-7-deazaguanine + ADP + phosphate + H2O + H(+). It functions in the pathway purine metabolism; 7-cyano-7-deazaguanine biosynthesis. Its function is as follows. Catalyzes the ATP-dependent conversion of 7-carboxy-7-deazaguanine (CDG) to 7-cyano-7-deazaguanine (preQ(0)). The sequence is that of 7-cyano-7-deazaguanine synthase from Coxiella burnetii (strain Dugway 5J108-111).